The primary structure comprises 262 residues: Leucine-rich repeat-containing protein 18 (262 aa).

LRR repeat units lie at residues 28–49 (GRKR…ILRL), 51–72 (DIDE…IAKF), 74–95 (NLRW…IGQM), 97–118 (SLLF…VELN), 122–144 (NIRT…GALK), 145–167 (ELHE…AKLP), and 168–189 (KLKK…EMFV).

Exclusively expressed in spermatocytes and roud spermatids within seminiferous tubules during spermatogenesis.

Its subcellular location is the cytoplasm. Functionally, may be involved in the regulation of spermatogenesis and sperm maturation. The polypeptide is Leucine-rich repeat-containing protein 18 (Lrrc18) (Mus musculus (Mouse)).